The sequence spans 923 residues: Tyrosine-protein kinase receptor torso (923 aa).

The first 20 residues, 1–20 (MLIFYAKYAFIFWFFVGSNQ), serve as a signal peptide directing secretion. At 21–399 (GEMLLMDKIS…VLLSEGNMVK (379 aa)) the chain is on the extracellular side. N37, N63, N107, N142, N146, N287, N298, N314, N326, N342, N348, and N377 each carry an N-linked (GlcNAc...) asparagine glycan. The chain crosses the membrane as a helical span at residues 400 to 420 (LVLFIIVPICCILMLCSLTFC). The Cytoplasmic portion of the chain corresponds to 421 to 923 (RRNRSEVQAL…EEELYLEPLN (503 aa)). One can recognise a Protein kinase domain in the interval 475 to 874 (VLLQDVLGEG…TFSALKHRLG (400 aa)). Residues 481-489 (LGEGAFGLV) and K502 contribute to the ATP site. S608 carries the phosphoserine modification. Residues 656 to 687 (YIPKTAEAPKDRPKRKLKPQPKKDSKQDFKSD) are disordered. Positions 676 to 687 (PKKDSKQDFKSD) are enriched in basic and acidic residues. Catalysis depends on D741, which acts as the Proton acceptor.

The protein belongs to the protein kinase superfamily. Tyr protein kinase family. Mg(2+) serves as cofactor. May be auto-phosphorylated on tyrosine residues.

The protein localises to the membrane. The catalysed reaction is L-tyrosyl-[protein] + ATP = O-phospho-L-tyrosyl-[protein] + ADP + H(+). In terms of biological role, probable receptor tyrosine kinase which is required for determination of anterior and posterior terminal structures in the embryo. During postembryonic development, involved in the initiation of metamorphosis probably by inducing the production of ecdysone in response to prothoracicotropic hormone Ptth. Binding to Ptth stimulates activation of canonical MAPK signaling leading to ERK phosphorylation. This Drosophila melanogaster (Fruit fly) protein is Tyrosine-protein kinase receptor torso (tor).